The chain runs to 284 residues: MLSKQIPLGIYEKALPAGECWLERLQLAKTLGFDFVEMSVDETDDRLSRLDWSREQRLALVNAIVETGVRVPSMCLSAHRRFPLGSEDDAVRAQGLEIMRKAIQFAQDVGIRVIQLAGYDVYYQEANNETRRRFRDGLKESVEMASRAQVTLAMEIMDYPLMNSISKALGYAHYFNNPWFQLYPDIGNLSAWDNDVQMELQAGIGHIVAVHVKDTKPGVFKNVPFGEGVVDFERCFETLKQSGYCGPYLIEMWSETAEDPAAEVAKARDWVKARMAKAGMVEAA.

This sequence belongs to the L-ribulose-5-phosphate 3-epimerase family.

The enzyme catalyses L-ribulose 5-phosphate = L-xylulose 5-phosphate. It functions in the pathway cofactor degradation; L-ascorbate degradation; D-xylulose 5-phosphate from L-ascorbate: step 3/4. Functionally, catalyzes the isomerization of L-xylulose-5-phosphate to L-ribulose-5-phosphate. Is involved in the anaerobic L-ascorbate utilization. This Escherichia coli O45:K1 (strain S88 / ExPEC) protein is L-ribulose-5-phosphate 3-epimerase UlaE.